Consider the following 98-residue polypeptide: NADH-ubiquinone oxidoreductase chain 4L (98 aa).

3 consecutive transmembrane segments (helical) span residues 1–21 (MSLT…GLLM), 29–49 (SLLC…ITIL), and 61–81 (IILL…LVMV).

This sequence belongs to the complex I subunit 4L family. As to quaternary structure, core subunit of respiratory chain NADH dehydrogenase (Complex I) which is composed of 45 different subunits.

The protein resides in the mitochondrion inner membrane. The enzyme catalyses a ubiquinone + NADH + 5 H(+)(in) = a ubiquinol + NAD(+) + 4 H(+)(out). In terms of biological role, core subunit of the mitochondrial membrane respiratory chain NADH dehydrogenase (Complex I) which catalyzes electron transfer from NADH through the respiratory chain, using ubiquinone as an electron acceptor. Part of the enzyme membrane arm which is embedded in the lipid bilayer and involved in proton translocation. This is NADH-ubiquinone oxidoreductase chain 4L (MT-ND4L) from Artibeus jamaicensis (Jamaican fruit-eating bat).